The following is a 183-amino-acid chain: Peptide deformylase (183 aa).

Residues cysteine 110 and histidine 153 each contribute to the Fe cation site. Glutamate 154 is an active-site residue. Histidine 157 is a Fe cation binding site.

This sequence belongs to the polypeptide deformylase family. Fe(2+) serves as cofactor.

It catalyses the reaction N-terminal N-formyl-L-methionyl-[peptide] + H2O = N-terminal L-methionyl-[peptide] + formate. Removes the formyl group from the N-terminal Met of newly synthesized proteins. Requires at least a dipeptide for an efficient rate of reaction. N-terminal L-methionine is a prerequisite for activity but the enzyme has broad specificity at other positions. The polypeptide is Peptide deformylase (Shouchella clausii (strain KSM-K16) (Alkalihalobacillus clausii)).